Consider the following 222-residue polypeptide: Thymidylate kinase (222 aa).

ATP is bound by residues 29-34 (RVGKST) and Arg111. The tract at residues 146–170 (LSMSSEDATKRGEYGGERYEKLEFQ) is LID.

The protein belongs to the thymidylate kinase family. Homodimer. It depends on Mg(2+) as a cofactor.

The catalysed reaction is dTMP + ATP = dTDP + ADP. It participates in pyrimidine metabolism; dTTP biosynthesis. Its function is as follows. Catalyzes the phosphorylation of thymidine monophosphate (dTMP) to thymidine diphosphate (dTDP), the immediate precursor for the DNA building block dTTP, with ATP as the preferred phosphoryl donor in the presence of Mg(2+). The sequence is that of Thymidylate kinase (dtymk) from Dictyostelium discoideum (Social amoeba).